The following is a 1865-amino-acid chain: Endoribonuclease Dicer (1865 aa).

The region spanning L41–E213 is the Helicase ATP-binding domain. L54 to T61 serves as a coordination point for ATP. Positions D161–H164 match the DECH box motif. Residues S397–E417 form a disordered region. Positions D400–E411 are enriched in acidic residues. The region spanning N419–E588 is the Helicase C-terminal domain. A Dicer dsRNA-binding fold domain is found at A616 to Y708. The tract at residues D713–R732 is disordered. Positions K881 to P1028 constitute a PAZ domain. Composition is skewed to polar residues over residues G1111–V1128 and S1192–V1201. Disordered regions lie at residues G1111–K1142 and D1190–S1259. A compositionally biased stretch (low complexity) spans S1240–T1252. An RNase III 1 domain is found at A1262–K1385. Mg(2+)-binding residues include E1298, D1377, and D1380. Residues K1373–N1417 form a disordered region. The span at S1374–A1388 shows a compositional bias: basic and acidic residues. Positions D1394–V1409 are enriched in acidic residues. The region spanning F1609–G1767 is the RNase III 2 domain. Residues E1648, D1753, and E1756 each coordinate Mg(2+). One can recognise a DRBM domain in the interval V1792–A1857.

It belongs to the helicase family. Dicer subfamily. As to quaternary structure, component of the RISC loading complex (RLC), or micro-RNA (miRNA) loading complex (miRLC), which is composed of dicer1, ago2 and tarbp2; dicer1 and tarbp2 are required to process precursor miRNAs (pre-miRNAs) to mature miRNAs and then load them onto ago2. Note that the trimeric RLC/miRLC is also referred to as RISC. Mg(2+) serves as cofactor. The cofactor is Mn(2+).

The protein localises to the cytoplasm. It carries out the reaction Endonucleolytic cleavage to 5'-phosphomonoester.. Functionally, double-stranded RNA (dsRNA) endoribonuclease playing a central role in short dsRNA-mediated post-transcriptional gene silencing. Cleaves naturally occurring long dsRNAs and short hairpin pre-microRNAs (miRNA) into fragments of twenty-one to twenty-three nucleotides with 3' overhang of two nucleotides, producing respectively short interfering RNAs (siRNA) and mature microRNAs. SiRNAs and miRNAs serve as guide to direct the RNA-induced silencing complex (RISC) to complementary RNAs to degrade them or prevent their translation. Gene silencing mediated by siRNAs, also called RNA interference, controls the elimination of transcripts from mobile and repetitive DNA elements of the genome but also the degradation of exogenous RNA of viral origin for instance. The miRNA pathway on the other side is a mean to specifically regulate the expression of target genes. This is Endoribonuclease Dicer (dicer1) from Danio rerio (Zebrafish).